A 300-amino-acid chain; its full sequence is MKIKAKNIVKIYDQKLPSELKALDKVTTEINQGEFIAIIGQTGSGKTTFIQHMNALLLPDQGEIEYLYFDSKNQEKKLVVQKPRFFRKKLKFINEIRRRVGVVFQFAEYQLFEQTIEKDIIFGAVSMGTPKNEAKKIAAEIIELVGLDQSFLQKSPFELSGGQKRRVAIAGILAMDPDIIFFDEPTAGLDPQGTLKMLEILDTLYKKGKTIILATHDLDSVLEWTKRCIFFKDGRIIYDGDTYSILANNKFLIENKMLPTNLLNFREKLIKIGYPISNVRSVSELISEINMLIQKETNAD.

In terms of domain architecture, ABC transporter spans 3 to 258 (IKAKNIVKIY…NKFLIENKML (256 aa)). 40 to 47 (GQTGSGKT) provides a ligand contact to ATP.

It belongs to the ABC transporter superfamily. Energy-coupling factor EcfA family. Forms a stable energy-coupling factor (ECF) transporter complex composed of 2 membrane-embedded substrate-binding proteins (S component), 2 ATP-binding proteins (A component) and 2 transmembrane proteins (T component).

The protein localises to the cell membrane. ATP-binding (A) component of a common energy-coupling factor (ECF) ABC-transporter complex. Unlike classic ABC transporters this ECF transporter provides the energy necessary to transport a number of different substrates. This chain is Energy-coupling factor transporter ATP-binding protein EcfA2, found in Mesomycoplasma hyopneumoniae (strain 232) (Mycoplasma hyopneumoniae).